A 37-amino-acid polypeptide reads, in one-letter code: Cytochrome b6-f complex subunit 5 (37 aa).

Residues 5–25 (FLLGIILGLIPITLIGLFVTA) traverse the membrane as a helical segment.

This sequence belongs to the PetG family. In terms of assembly, the 4 large subunits of the cytochrome b6-f complex are cytochrome b6, subunit IV (17 kDa polypeptide, PetD), cytochrome f and the Rieske protein, while the 4 small subunits are PetG, PetL, PetM and PetN. The complex functions as a dimer.

It localises to the plastid membrane. Its function is as follows. Component of the cytochrome b6-f complex, which mediates electron transfer between photosystem II (PSII) and photosystem I (PSI), cyclic electron flow around PSI, and state transitions. PetG is required for either the stability or assembly of the cytochrome b6-f complex. In Cuscuta obtusiflora (Peruvian dodder), this protein is Cytochrome b6-f complex subunit 5.